The sequence spans 486 residues: Cobyric acid synthase (486 aa).

A GATase cobBQ-type domain is found at 248–435 (VLNVVVPVLP…LHGLFESPAA (188 aa)). The active-site Nucleophile is the Cys329. His427 is an active-site residue.

Belongs to the CobB/CobQ family. CobQ subfamily.

The protein operates within cofactor biosynthesis; adenosylcobalamin biosynthesis. In terms of biological role, catalyzes amidations at positions B, D, E, and G on adenosylcobyrinic A,C-diamide. NH(2) groups are provided by glutamine, and one molecule of ATP is hydrogenolyzed for each amidation. The polypeptide is Cobyric acid synthase (Pseudomonas syringae pv. syringae (strain B728a)).